The following is a 184-amino-acid chain: Tumor necrosis factor receptor superfamily member 13C (184 aa).

At 1 to 78 the chain is on the extracellular side; that stretch reads MRRGPRSLRG…EAALPLPGLL (78 aa). A TNFR-Cys; truncated repeat occupies 18-35; the sequence is PCVPAECFDLLVRHCVAC. Intrachain disulfides connect Cys19–Cys32 and Cys24–Cys35. The segment at 26-31 is essential for TNFSF13B/TALL1/BAFF/BLyS binding; the sequence is DLLVRH. The tract at residues 43 to 62 is disordered; that stretch reads PKPAGASSPAPRTALQPQES. The helical; Signal-anchor for type III membrane protein transmembrane segment at 79–99 threads the bilayer; the sequence is FGAPALLGLALVLALVLVGLV. Topologically, residues 100 to 184 are cytoplasmic; the sequence is SWRRRQRRLR…TTKTAGPEQQ (85 aa). Positions 107-184 are disordered; the sequence is RLRGASSAEA…TTKTAGPEQQ (78 aa). The span at 118–128 shows a compositional bias: basic and acidic residues; that stretch reads DGDKDAPEPLD. Positions 168 to 184 are enriched in polar residues; that stretch reads LGSTELVTTKTAGPEQQ.

As to expression, highly expressed in spleen and lymph node, and in resting B-cells. Detected at lower levels in activated B-cells, resting CD4+ T-cells, in thymus and peripheral blood leukocytes.

The protein resides in the membrane. Functionally, B-cell receptor specific for TNFSF13B/TALL1/BAFF/BLyS. Promotes the survival of mature B-cells and the B-cell response. This chain is Tumor necrosis factor receptor superfamily member 13C (TNFRSF13C), found in Homo sapiens (Human).